A 267-amino-acid polypeptide reads, in one-letter code: Tetrahydromethanopterin S-methyltransferase subunit C (267 aa).

8 helical membrane passes run L18–V38, I39–I59, Y76–V96, I99–L119, I138–T158, L163–I183, F209–V229, and S230–E250.

It belongs to the MtrC family. The complex is composed of 8 subunits; MtrA, MtrB, MtrC, MtrD, MtrE, MtrF, MtrG and MtrH.

It localises to the cell membrane. It catalyses the reaction 5-methyl-5,6,7,8-tetrahydromethanopterin + coenzyme M + 2 Na(+)(in) = 5,6,7,8-tetrahydromethanopterin + methyl-coenzyme M + 2 Na(+)(out). It participates in one-carbon metabolism; methanogenesis from CO(2); methyl-coenzyme M from 5,10-methylene-5,6,7,8-tetrahydromethanopterin: step 2/2. Its function is as follows. Part of a complex that catalyzes the formation of methyl-coenzyme M and tetrahydromethanopterin from coenzyme M and methyl-tetrahydromethanopterin. This is an energy-conserving, sodium-ion translocating step. The chain is Tetrahydromethanopterin S-methyltransferase subunit C from Methanothermobacter marburgensis (strain ATCC BAA-927 / DSM 2133 / JCM 14651 / NBRC 100331 / OCM 82 / Marburg) (Methanobacterium thermoautotrophicum).